We begin with the raw amino-acid sequence, 188 residues long: Protein SSX5 (188 aa).

In terms of domain architecture, KRAB-related spans 20-83 (KMQKAFDDIA…KRVADFQGND (64 aa)). The disordered stretch occupies residues 78–188 (DFQGNDFDND…EISDPQEDDE (111 aa)). Residues 112-122 (TPEKPAEEGND) are compositionally biased toward basic and acidic residues. The segment covering 144 to 155 (KLNTSEKVNKTS) has biased composition (polar residues). Positions 156-170 (GPKRGKHAWTHRVRE) are enriched in basic residues. Residues 179–188 (EISDPQEDDE) are compositionally biased toward acidic residues.

The protein belongs to the SSX family.

Could act as a modulator of transcription. This is Protein SSX5 (SSX5) from Homo sapiens (Human).